A 554-amino-acid polypeptide reads, in one-letter code: Sesquiterpene synthase 14a (554 aa).

Aspartate 305, aspartate 309, aspartate 449, and glutamate 457 together coordinate Mg(2+). Positions 305-309 (DDLYD) match the DDXXD motif motif.

This sequence belongs to the terpene synthase family. Tpsa subfamily. Requires Mg(2+) as cofactor. Mn(2+) is required as a cofactor. Mostly expressed in stem trichomes.

The catalysed reaction is (2E,6E)-farnesyl diphosphate = beta-bisabolene + diphosphate. The enzyme catalyses (2E,6E)-farnesyl diphosphate = (Z)-alpha-bisabolene + diphosphate. It catalyses the reaction (2E,6E)-farnesyl diphosphate = beta-acoradiene + diphosphate. It carries out the reaction (2E,6E)-farnesyl diphosphate = (E)-gamma-bisabolene + diphosphate. The catalysed reaction is (2E,6E)-farnesyl diphosphate = (E)-beta-farnesene + diphosphate. The enzyme catalyses (2E,6E)-farnesyl diphosphate = (Z)-beta-farnesene + diphosphate. It catalyses the reaction (2E)-geranyl diphosphate = limonene + diphosphate. It carries out the reaction (2E)-geranyl diphosphate = beta-myrcene + diphosphate. The protein operates within secondary metabolite biosynthesis; terpenoid biosynthesis. In terms of biological role, sesquiterpene synthase involved in the biosynthesis of volatile compounds. Mediates the conversion of (2E,6E)-farnesyl diphosphate ((EE)-FPP) into beta-bisabolene, beta-farnesene, (E)-gamma-bisabolene, beta-acoradiene, selinene and (Z)-alpha-bisabolene. Low or no activity with (2Z,6Z)-farnesyl diphosphate ((ZZ)-FPP). Can act with a low efficiency as a monoterpene synthase with geranyl diphosphate (GPP) as substrate, thus producing beta-myrcene and limonene. This chain is Sesquiterpene synthase 14a, found in Solanum habrochaites (Wild tomato).